The primary structure comprises 660 residues: DNA ligase (660 aa).

NAD(+)-binding positions include 31–35, 79–80, and E111; these read DKEYD and SL. The active-site N6-AMP-lysine intermediate is K113. 4 residues coordinate NAD(+): R134, E168, K280, and K304. Zn(2+)-binding residues include C397, C400, C413, and C419. Residues 577 to 660 form the BRCT domain; the sequence is RQESIFSGKT…LDEAAFEALL (84 aa).

This sequence belongs to the NAD-dependent DNA ligase family. LigA subfamily. Requires Mg(2+) as cofactor. It depends on Mn(2+) as a cofactor.

It carries out the reaction NAD(+) + (deoxyribonucleotide)n-3'-hydroxyl + 5'-phospho-(deoxyribonucleotide)m = (deoxyribonucleotide)n+m + AMP + beta-nicotinamide D-nucleotide.. Functionally, DNA ligase that catalyzes the formation of phosphodiester linkages between 5'-phosphoryl and 3'-hydroxyl groups in double-stranded DNA using NAD as a coenzyme and as the energy source for the reaction. It is essential for DNA replication and repair of damaged DNA. The polypeptide is DNA ligase (Alkaliphilus metalliredigens (strain QYMF)).